The sequence spans 165 residues: Phosphopantetheine adenylyltransferase (165 aa).

T9 lines the substrate pocket. ATP-binding positions include 9-10 (TF) and H17. Substrate contacts are provided by K41, L73, and R87. Residues 88 to 90 (GLR), E98, and 123 to 129 (YQFISGT) each bind ATP.

The protein belongs to the bacterial CoaD family. Homohexamer. It depends on Mg(2+) as a cofactor.

The protein localises to the cytoplasm. The catalysed reaction is (R)-4'-phosphopantetheine + ATP + H(+) = 3'-dephospho-CoA + diphosphate. It participates in cofactor biosynthesis; coenzyme A biosynthesis; CoA from (R)-pantothenate: step 4/5. Functionally, reversibly transfers an adenylyl group from ATP to 4'-phosphopantetheine, yielding dephospho-CoA (dPCoA) and pyrophosphate. The chain is Phosphopantetheine adenylyltransferase from Burkholderia lata (strain ATCC 17760 / DSM 23089 / LMG 22485 / NCIMB 9086 / R18194 / 383).